Reading from the N-terminus, the 238-residue chain is 4-hydroxy-tetrahydrodipicolinate reductase (238 aa).

An NAD(+)-binding site is contributed by 12–17 (GASGRM). Residue arginine 40 coordinates NADP(+). Residues 93 to 95 (GTT) and 117 to 120 (ASNF) each bind NAD(+). Catalysis depends on histidine 149, which acts as the Proton donor/acceptor. Histidine 150 is a (S)-2,3,4,5-tetrahydrodipicolinate binding site. Lysine 153 (proton donor) is an active-site residue. Residue 159-160 (GT) participates in (S)-2,3,4,5-tetrahydrodipicolinate binding.

Belongs to the DapB family.

The protein resides in the cytoplasm. It carries out the reaction (S)-2,3,4,5-tetrahydrodipicolinate + NAD(+) + H2O = (2S,4S)-4-hydroxy-2,3,4,5-tetrahydrodipicolinate + NADH + H(+). The catalysed reaction is (S)-2,3,4,5-tetrahydrodipicolinate + NADP(+) + H2O = (2S,4S)-4-hydroxy-2,3,4,5-tetrahydrodipicolinate + NADPH + H(+). It participates in amino-acid biosynthesis; L-lysine biosynthesis via DAP pathway; (S)-tetrahydrodipicolinate from L-aspartate: step 4/4. Functionally, catalyzes the conversion of 4-hydroxy-tetrahydrodipicolinate (HTPA) to tetrahydrodipicolinate. The protein is 4-hydroxy-tetrahydrodipicolinate reductase of Xanthomonas axonopodis pv. citri (strain 306).